Consider the following 314-residue polypeptide: Porphobilinogen deaminase (314 aa).

Residue Cys243 is modified to S-(dipyrrolylmethanemethyl)cysteine.

The protein belongs to the HMBS family. Monomer. Dipyrromethane is required as a cofactor.

The enzyme catalyses 4 porphobilinogen + H2O = hydroxymethylbilane + 4 NH4(+). Its pathway is porphyrin-containing compound metabolism; protoporphyrin-IX biosynthesis; coproporphyrinogen-III from 5-aminolevulinate: step 2/4. Its function is as follows. Tetrapolymerization of the monopyrrole PBG into the hydroxymethylbilane pre-uroporphyrinogen in several discrete steps. The polypeptide is Porphobilinogen deaminase (Bordetella bronchiseptica (strain ATCC BAA-588 / NCTC 13252 / RB50) (Alcaligenes bronchisepticus)).